Reading from the N-terminus, the 253-residue chain is Glutamate racemase (253 aa).

Substrate-binding positions include 7–8 (DS) and 39–40 (YG). C70 acts as the Proton donor/acceptor in catalysis. 71-72 (NT) contacts substrate. C180 (proton donor/acceptor) is an active-site residue. 181–182 (TH) is a substrate binding site.

This sequence belongs to the aspartate/glutamate racemases family.

It catalyses the reaction L-glutamate = D-glutamate. It functions in the pathway cell wall biogenesis; peptidoglycan biosynthesis. Provides the (R)-glutamate required for cell wall biosynthesis. This chain is Glutamate racemase, found in Halothermothrix orenii (strain H 168 / OCM 544 / DSM 9562).